A 2009-amino-acid polypeptide reads, in one-letter code: Sodium channel protein type 1 subunit alpha (2009 aa).

Residues 1 to 128 (MEQTVLVPPG…KIAIKILVHS (128 aa)) lie on the Cytoplasmic side of the membrane. Residues 28 to 48 (RIAEEKAKNPKPDKKDDDENG) are compositionally biased toward basic and acidic residues. The interval 28-60 (RIAEEKAKNPKPDKKDDDENGPKPNSDLEAGKN) is disordered. An I repeat occupies 110–454 (ILTPFNPLRK…QQMLEQLKKQ (345 aa)). A helical transmembrane segment spans residues 129–146 (LFSMLIMCTILTNCVFMT). Residues 147-152 (MSNPPD) are Extracellular-facing. A helical membrane pass occupies residues 153-177 (WTKNVEYTFTGIYTFESLIKIIARG). Topologically, residues 178–188 (FCLEDFTFLRD) are cytoplasmic. Residues 189–205 (PWNWLDFTVITFAYVTE) traverse the membrane as a helical segment. Topologically, residues 206–213 (FVDLGNVS) are extracellular. N-linked (GlcNAc...) asparagine glycosylation occurs at asparagine 211. Residues 214-235 (ALRTFRVLRALKTISVIPGLKT) traverse the membrane as a helical segment. At 236-245 (IVGALIQSVK) the chain is on the cytoplasmic side. Residues 246 to 269 (KLSDVMILTVFCLSVFALIGLQLF) traverse the membrane as a helical segment. Residues 270-369 (MGNLRNKCVQ…YGYTSFDTFS (100 aa)) are Extracellular-facing. Cystine bridges form between cysteine 277/cysteine 345 and cysteine 336/cysteine 351. N-linked (GlcNAc...) asparagine glycosylation is found at asparagine 284, asparagine 295, asparagine 301, asparagine 306, and asparagine 338. The segment at residues 370 to 384 (WAFLSLFRLMTQDFW) is an intramembrane region (pore-forming). Residues 385 to 397 (ENLYQLTLRAAGK) are Extracellular-facing. A helical transmembrane segment spans residues 398–423 (TYMIFFVLVIFLGSFYLINLILAVVA). At 424–768 (MAYEEQNQAT…HIVNLVVMDP (345 aa)) the chain is on the cytoplasmic side. The disordered stretch occupies residues 458 to 528 (AQQAAAATAS…EFHKSESEDS (71 aa)). At serine 470 the chain carries Phosphoserine. Residues 479–492 (LSDSSSEASKLSSK) show a composition bias toward low complexity. Positions 495-506 (KERRNRRKKRKQ) are enriched in basic residues. The span at 507-528 (KEQSGGEEKDDDEFHKSESEDS) shows a compositional bias: basic and acidic residues. Phosphoserine is present on residues serine 523, serine 525, serine 550, serine 551, serine 607, and serine 730. Positions 584-628 (VGSENDFADDEHSTFEDNESRRDSLFVPRRHGERRNSNLSQTSRS) are disordered. Positions 593–607 (DEHSTFEDNESRRDS) are enriched in basic and acidic residues. An II repeat occupies 750-1022 (CSPYWLKVKH…QIAVDRMHKG (273 aa)). The chain crosses the membrane as a helical span at residues 769 to 787 (FVDLAITICIVLNTLFMAM). Residues 788 to 797 (EHYPMTEHFN) lie on the Extracellular side of the membrane. The chain crosses the membrane as a helical span at residues 798–820 (HVLTVGNLVFTGIFTAEMFLKII). The Cytoplasmic segment spans residues 821-830 (AMDPYYYFQE). Residues 831–849 (GWNIFDGFIVTLSLVELGL) form a helical membrane-spanning segment. At 850–854 (ANVEG) the chain is on the extracellular side. The helical transmembrane segment at 855 to 874 (LSVLRSFRLLRVFKLAKSWP) threads the bilayer. The Cytoplasmic portion of the chain corresponds to 875 to 891 (TLNMLIKIIGNSVGALG). The chain crosses the membrane as a helical span at residues 892-912 (NLTLVLAIIVFIFAVVGMQLF). The Extracellular portion of the chain corresponds to 913–938 (GKSYKDCVCKIATDCKLPRWHMNDFF). An intrachain disulfide couples cysteine 921 to cysteine 927. The pore-forming intramembrane region spans 939–952 (HSFLIVFRVLCGEW). Residues 953–965 (IETMWDCMEVAGQ) lie on the Extracellular side of the membrane. Cysteine 959 and cysteine 968 form a disulfide bridge. A helical membrane pass occupies residues 966–992 (AMCLTVFMMVMVIRNLVVLNLFLALLL). Topologically, residues 993-1218 (SSFSADNLAA…RTCFRIVEHN (226 aa)) are cytoplasmic. A disordered region spans residues 1129–1163 (TEDFSSESDLEESKEKLNESSSSSEGSTVDIGAPA). The III repeat unit spans residues 1200 to 1514 (RGKQWWNLRR…KKYYNAMKKL (315 aa)). A helical transmembrane segment spans residues 1219-1237 (WFETFIVFMILLSSGALAF). Over 1238–1250 (EDIYIDQRKTIKT) the chain is Extracellular. Residues 1251–1276 (MLEYADKVFTYIFILEMLLKWVAYGY) form a helical membrane-spanning segment. Over 1277–1278 (QT) the chain is Cytoplasmic. Residues 1279 to 1304 (YFTNAWCWLDFLIVDVSLVSLTANAL) form a helical membrane-spanning segment. Residues 1305–1313 (GYSELGAIK) lie on the Extracellular side of the membrane. The helical transmembrane segment at 1314-1332 (SLRTLRALRPLRALSRFEG) threads the bilayer. The Cytoplasmic portion of the chain corresponds to 1333–1345 (MRVVVNALLGAIP). A helical transmembrane segment spans residues 1346 to 1369 (SIMNVLLVCLIFWLIFSIMGVNLF). Residues 1370–1415 (AGKFYHCVNTTTGDTFEITEVNNHSDCLKLIERNETARWKNVKVNF) lie on the Extracellular side of the membrane. Cysteine 1376 and cysteine 1396 are disulfide-bonded. Asparagine 1378, asparagine 1392, and asparagine 1403 each carry an N-linked (GlcNAc...) asparagine glycan. Residues 1416 to 1433 (DNVGFGYLSLLQVATFKG) constitute an intramembrane region (pore-forming). Residues 1434 to 1457 (WMDIMYAAVDSRNVELQPKYEESL) are Extracellular-facing. The chain crosses the membrane as a helical span at residues 1458-1483 (YMYLYFVIFIIFGSFFTLNLFIGVII). The Cytoplasmic portion of the chain corresponds to 1484-1541 (DNFNQQKKKFGGQDIFMTEEQKKYYNAMKKLGSKKPQKPIPRPGNKFQGMVFDFVTRQ). Residue serine 1516 is modified to Phosphoserine; by PKC. Residues 1523–1821 (IPRPGNKFQG…WEKFDPDATQ (299 aa)) form an IV repeat. Residues 1542–1560 (VFDISIMILICLNMVTMMV) traverse the membrane as a helical segment. Residues 1561 to 1571 (ETDDQSDYVTS) lie on the Extracellular side of the membrane. The interval 1561 to 1571 (ETDDQSDYVTS) is S1-S2 loop of repeat IV. The helical transmembrane segment at 1572 to 1593 (ILSRINLVFIVLFTGECVLKLI) threads the bilayer. The Cytoplasmic segment spans residues 1594 to 1601 (SLRHYYFT). A helical membrane pass occupies residues 1602-1623 (IGWNIFDFVVVILSIVGMFLAE). Positions 1619–1636 (MFLAELIEKYFVSPTLFR) are S3b-S4 loop of repeat IV. The Extracellular segment spans residues 1624-1636 (LIEKYFVSPTLFR). A helical transmembrane segment spans residues 1637-1655 (VIRLARIGRILRLIKGAKG). The Cytoplasmic portion of the chain corresponds to 1656–1665 (IRTLLFALMM). A helical transmembrane segment spans residues 1666–1688 (SLPALFNIGLLLFLVMFIYAIFG). The Extracellular portion of the chain corresponds to 1689-1711 (MSNFAYVKREVGIDDMFNFETFG). The segment at residues 1712-1726 (NSMICLFQITTSAGW) is an intramembrane region (pore-forming). Over 1727–1759 (DGLLAPILNSKPPDCDPNKVNPGSSVKGDCGNP) the chain is Extracellular. An intrachain disulfide couples cysteine 1741 to cysteine 1756. The chain crosses the membrane as a helical span at residues 1760-1788 (SVGIFFFVSYIIISFLVVVNMYIAVILEN). Residues 1789 to 2009 (FSVATEESAE…EGKDEKAKGK (221 aa)) are Cytoplasmic-facing. An IQ domain is found at 1915–1944 (EEVSAVIIQRAYRRHLLKRTVKQASFTYNK). The tract at residues 1986-2009 (YDRVTKPIVEKHEQEGKDEKAKGK) is disordered. Over residues 1988-2009 (RVTKPIVEKHEQEGKDEKAKGK) the composition is skewed to basic and acidic residues.

It belongs to the sodium channel (TC 1.A.1.10) family. Nav1.1/SCN1A subfamily. In terms of assembly, the Nav1.1 voltage-gated sodium channel consists of an ion-conducting alpha subunit SCN1A which is functional on its own regulated by one or more beta-1 (SCN1B), beta-2 (SCN2B), beta-3 (SCN3B) and beta-4 (SCN4B) subunits. SCN1B and SCN3B are non-covalently associated with SCN1A. SCN2B and SCN4B are disulfide-linked to SCN1A. SCN1B regulates both the expression at the plasma membrane and the voltage dependence of Nav1.1 inactivation. SCN3B and SCN4B reduce Nav1.1 conductance. Probably interacts with TMEM233; modulates the gating properties of NaV1.1. Interacts with FGF13; regulates the steady-state inactivation of Nav.1.1. Phosphorylation at Ser-1516 by PKC in a highly conserved cytoplasmic loop slows inactivation of the sodium channel and reduces peak sodium currents.

The protein localises to the cell membrane. It carries out the reaction Na(+)(in) = Na(+)(out). Its activity is regulated as follows. Activated by the spider toxins Hm1a and Hm1b (H.maculata, AC P60992 and AC P0DOC5) eliciting acute pain and mechanical allodynia. Inhibited by the conotoxin GVIIJ. In terms of biological role, pore-forming subunit of Nav1.1, a voltage-gated sodium (Nav) channel that directly mediates the depolarizing phase of action potentials in excitable membranes. Navs, also called VGSCs (voltage-gated sodium channels) or VDSCs (voltage-dependent sodium channels), operate by switching between closed and open conformations depending on the voltage difference across the membrane. In the open conformation they allow Na(+) ions to selectively pass through the pore, along their electrochemical gradient. The influx of Na(+) ions provokes membrane depolarization, initiating the propagation of electrical signals throughout cells and tissues. By regulating the excitability of neurons, ensures that they respond appropriately to synaptic inputs, maintaining the balance between excitation and inhibition in brain neural circuits. Nav1.1 plays a role in controlling the excitability and action potential propagation from somatosensory neurons, thereby contributing to the sensory perception of mechanically-induced pain. The sequence is that of Sodium channel protein type 1 subunit alpha from Rattus norvegicus (Rat).